The primary structure comprises 106 residues: MVQVISNLDEFNKLTNSGKIIIIDFWATWCGPCRVISPIFEKFSEKYGANNIVFAKVDVDTASDISEEAKIRAMPTFQVYKDGQKIDELVGANPTALESLVQKSLA.

Positions 2–106 (VQVISNLDEF…LESLVQKSLA (105 aa)) constitute a Thioredoxin domain. Active-site nucleophile residues include Cys-30 and Cys-33. Cys-30 and Cys-33 are joined by a disulfide.

This sequence belongs to the thioredoxin family.

Its function is as follows. Participates in various redox reactions through the reversible oxidation of its active center dithiol to a disulfide and catalyzes dithiol-disulfide exchange reactions. The chain is Thioredoxin from Coprinus comatus (Shaggy mane).